The chain runs to 344 residues: Oxygen sensor histidine kinase NreB (344 aa).

Residues Cys-58, Cys-61, Cys-73, and Cys-76 each coordinate [4Fe-4S] cluster. In terms of domain architecture, Histidine kinase spans 152–344; sequence RISRELHDSV…GTNVTLNIPI (193 aa). A Phosphohistidine; by autocatalysis modification is found at His-158.

Requires [4Fe-4S] cluster as cofactor. Post-translationally, autophosphorylated.

Its subcellular location is the cytoplasm. It carries out the reaction ATP + protein L-histidine = ADP + protein N-phospho-L-histidine.. In terms of biological role, member of the two-component regulatory system NreB/NreC involved in the control of dissimilatory nitrate/nitrite reduction in response to oxygen. NreB functions as a direct oxygen sensor histidine kinase which is autophosphorylated, in the absence of oxygen, probably at the conserved histidine residue, and transfers its phosphate group probably to a conserved aspartate residue of NreC. NreB/NreC activates the expression of the nitrate (narGHJI) and nitrite (nir) reductase operons, as well as the putative nitrate transporter gene narT. The sequence is that of Oxygen sensor histidine kinase NreB (nreB) from Staphylococcus aureus (strain JH1).